The chain runs to 242 residues: 3-deoxy-manno-octulosonate cytidylyltransferase (242 aa).

Belongs to the KdsB family.

The protein resides in the cytoplasm. The enzyme catalyses 3-deoxy-alpha-D-manno-oct-2-ulosonate + CTP = CMP-3-deoxy-beta-D-manno-octulosonate + diphosphate. It participates in nucleotide-sugar biosynthesis; CMP-3-deoxy-D-manno-octulosonate biosynthesis; CMP-3-deoxy-D-manno-octulosonate from 3-deoxy-D-manno-octulosonate and CTP: step 1/1. The protein operates within bacterial outer membrane biogenesis; lipopolysaccharide biosynthesis. Functionally, activates KDO (a required 8-carbon sugar) for incorporation into bacterial lipopolysaccharide in Gram-negative bacteria. The protein is 3-deoxy-manno-octulosonate cytidylyltransferase of Anaeromyxobacter dehalogenans (strain 2CP-1 / ATCC BAA-258).